The sequence spans 199 residues: MTTSAARKGLRTRGSACPRATRSASSISSRAQVIVAGPITDKLAQRTVAHLLALAEDSDEPINMLISSPGGHVESGDMIHDVIKFIRPTVRTIGLAWVASAGALIFVGADKENRYCLPNTRFLIHQPSVGIGGTSTDMMIQAEQVRLMRDRLNQIFAEATGQPVERIEKDTQRDFWLNTQEALDYGLLGKVIRSVDELK.

The segment at 1–23 (MTTSAARKGLRTRGSACPRATRS) is disordered. The active-site Nucleophile is the Ser100. Residue His125 is part of the active site.

Belongs to the peptidase S14 family. In terms of assembly, fourteen ClpP subunits assemble into 2 heptameric rings which stack back to back to give a disk-like structure with a central cavity, resembling the structure of eukaryotic proteasomes.

Its subcellular location is the cytoplasm. It catalyses the reaction Hydrolysis of proteins to small peptides in the presence of ATP and magnesium. alpha-casein is the usual test substrate. In the absence of ATP, only oligopeptides shorter than five residues are hydrolyzed (such as succinyl-Leu-Tyr-|-NHMec, and Leu-Tyr-Leu-|-Tyr-Trp, in which cleavage of the -Tyr-|-Leu- and -Tyr-|-Trp bonds also occurs).. Its function is as follows. Cleaves peptides in various proteins in a process that requires ATP hydrolysis. Has a chymotrypsin-like activity. Plays a major role in the degradation of misfolded proteins. This is ATP-dependent Clp protease proteolytic subunit from Paracoccus denitrificans.